A 1233-amino-acid polypeptide reads, in one-letter code: Pesticidal crystal protein Cry1Bc (1233 aa).

It belongs to the delta endotoxin family.

Functionally, promotes colloidosmotic lysis by binding to the midgut epithelial cells of insects. The chain is Pesticidal crystal protein Cry1Bc (cry1Bc) from Bacillus thuringiensis subsp. morrisoni.